Consider the following 857-residue polypeptide: Autoinducer 2 sensor kinase/phosphatase LuxQ (857 aa).

2 consecutive transmembrane segments (helical) span residues 20–40 and 283–303; these read IIFLVLGLITIGIFIQSYYFS and LGLATSVVLMLMLSLAIRSWI. The region spanning 490–712 is the Histidine kinase domain; the sequence is KMSHEIRTPL…TFYLSIPVEK (223 aa). H493 carries the phosphohistidine; by autocatalysis modification. The 116-residue stretch at 735-850 folds into the Response regulatory domain; sequence KVLLVEDNHT…ELHDELLHFK (116 aa). The residue at position 784 (D784) is a 4-aspartylphosphate.

In terms of assembly, binds the complex formed by the autoinducer and LuxP.

The protein resides in the cell inner membrane. It carries out the reaction ATP + protein L-histidine = ADP + protein N-phospho-L-histidine.. In terms of biological role, at low cell density, in absence of autoinducer has a kinase activity, and autophosphorylates on a histidine residue. The phosphoryl group is then transferred to an aspartate residue in the response regulator domain. The phosphoryl group is transferred to LuxU, and ultimately to LuxO. At high cell density, in the presence of autoinducer, the kinase activity is inactivated, and the response regulator domain has a phosphatase activity. In Vibrio vulnificus (strain CMCP6), this protein is Autoinducer 2 sensor kinase/phosphatase LuxQ (luxQ).